Reading from the N-terminus, the 421-residue chain is 3-phosphoshikimate 1-carboxyvinyltransferase (421 aa).

Residues Lys-21, Ser-22, and Arg-26 each contribute to the 3-phosphoshikimate site. Phosphoenolpyruvate is bound at residue Lys-21. Gly-93 and Arg-121 together coordinate phosphoenolpyruvate. Ser-166, Ser-167, Gln-168, Ser-194, Asp-310, and Lys-337 together coordinate 3-phosphoshikimate. Position 168 (Gln-168) interacts with phosphoenolpyruvate. The Proton acceptor role is filled by Asp-310. Phosphoenolpyruvate-binding residues include Arg-341, Arg-382, and Lys-407.

The protein belongs to the EPSP synthase family. As to quaternary structure, monomer.

Its subcellular location is the cytoplasm. It catalyses the reaction 3-phosphoshikimate + phosphoenolpyruvate = 5-O-(1-carboxyvinyl)-3-phosphoshikimate + phosphate. It functions in the pathway metabolic intermediate biosynthesis; chorismate biosynthesis. In terms of biological role, catalyzes the transfer of the enolpyruvyl moiety of phosphoenolpyruvate (PEP) to the 5-hydroxyl of shikimate-3-phosphate (S3P) to produce enolpyruvyl shikimate-3-phosphate and inorganic phosphate. The chain is 3-phosphoshikimate 1-carboxyvinyltransferase from Methanoregula boonei (strain DSM 21154 / JCM 14090 / 6A8).